Consider the following 139-residue polypeptide: Ribonuclease P protein component (139 aa).

This sequence belongs to the RnpA family. In terms of assembly, consists of a catalytic RNA component (M1 or rnpB) and a protein subunit.

It carries out the reaction Endonucleolytic cleavage of RNA, removing 5'-extranucleotides from tRNA precursor.. Its function is as follows. RNaseP catalyzes the removal of the 5'-leader sequence from pre-tRNA to produce the mature 5'-terminus. It can also cleave other RNA substrates such as 4.5S RNA. The protein component plays an auxiliary but essential role in vivo by binding to the 5'-leader sequence and broadening the substrate specificity of the ribozyme. This chain is Ribonuclease P protein component, found in Paraburkholderia xenovorans (strain LB400).